The chain runs to 793 residues: Kinesin-like protein KIN-14C (793 aa).

Residues 1–43 (MASRNQNRPPRSPNAKKEGLGGISFDKRRKVETQGGTGRRQAF) form a disordered region. The segment at 1–69 (MASRNQNRPP…IEECGKVDFT (69 aa)) is globular. Basic and acidic residues predominate over residues 15–32 (AKKEGLGGISFDKRRKVE). The stretch at 120–375 (KENLKVSLES…EQQLAIANER (256 aa)) forms a coiled coil. The Kinesin motor domain occupies 431 to 772 (NIRVFCRVRP…LRFAARVNAC (342 aa)). ATP is bound at residue 516–523 (GQTGSGKT).

This sequence belongs to the TRAFAC class myosin-kinesin ATPase superfamily. Kinesin family. KIN-14 subfamily.

It localises to the cytoplasm. The protein localises to the cytoskeleton. Its subcellular location is the spindle. It is found in the phragmoplast. The protein resides in the chromosome. It localises to the centromere. The protein localises to the kinetochore. Functionally, kinesin that supports microtubule movement in an ATP-dependent manner and has a minus-end directed polarity. Plays a crucial role in spindle morphogenesis in male meiosis. In mitosis, is required for normal microtubule accumulation at the spindle poles during prophase and may play a role in spindle assembly during prometaphase. This chain is Kinesin-like protein KIN-14C, found in Arabidopsis thaliana (Mouse-ear cress).